The chain runs to 937 residues: Protein translocase subunit SecA (937 aa).

Residues glutamine 86, 104 to 108 (GEGKT), and aspartate 493 contribute to the ATP site. The tract at residues 868 to 889 (LERPSQPTKLAYSAPSEDGDAE) is disordered. 4 residues coordinate Zn(2+): cysteine 911, cysteine 913, cysteine 922, and histidine 923. Residues 915–937 (SGKKFKQCHGRPGGPTGLTARVS) form a disordered region.

It belongs to the SecA family. In terms of assembly, monomer and homodimer. Part of the essential Sec protein translocation apparatus which comprises SecA, SecYEG and auxiliary proteins SecDF. Other proteins may also be involved. Zn(2+) is required as a cofactor.

The protein localises to the cell membrane. Its subcellular location is the cytoplasm. The enzyme catalyses ATP + H2O + cellular proteinSide 1 = ADP + phosphate + cellular proteinSide 2.. Part of the Sec protein translocase complex. Interacts with the SecYEG preprotein conducting channel. Has a central role in coupling the hydrolysis of ATP to the transfer of proteins into and across the cell membrane, serving as an ATP-driven molecular motor driving the stepwise translocation of polypeptide chains across the membrane. In Nocardioides sp. (strain ATCC BAA-499 / JS614), this protein is Protein translocase subunit SecA.